We begin with the raw amino-acid sequence, 288 residues long: Acidic endochitinase SP2 (288 aa).

The first 27 residues, 1-27 (MTLLLKNTLYLALIISVISSFPTSLFA), serve as a signal peptide directing secretion. Pyrrolidone carboxylic acid is present on Gln-28. The Chitin-binding type-1 domain maps to 28–63 (QNCGCAPNLCCSNFGFCGTGTPYCGVGNCQSGPCEG). 4 disulfide bridges follow: Cys-30–Cys-38, Cys-32–Cys-44, Cys-37–Cys-51, and Cys-56–Cys-61. Residues 64–78 (GTPTTPTTPTTPTTP) are compositionally biased toward low complexity. The tract at residues 64–84 (GTPTTPTTPTTPTTPGTGGGG) is disordered. A hinge region (Gly/Pro/Thr-rich) region spans residues 64–85 (GTPTTPTTPTTPTTPGTGGGGS). Pro-66, Pro-69, Pro-72, and Pro-75 each carry 4-hydroxyproline. 4 repeat units span residues 67-69 (TTP), 70-72 (TTP), 73-75 (TTP), and 76-78 (TTP). The tract at residues 67 to 78 (TTPTTPTTPTTP) is 4 X 3 AA tandem repeats of T-T-P. The tract at residues 86-288 (SVSDIVSQAF…GVAPGDNLTC (203 aa)) is catalytic. 3 cysteine pairs are disulfide-bonded: Cys-107–Cys-154, Cys-168–Cys-178, and Cys-256–Cys-288. Glu-149 (proton donor) is an active-site residue.

Belongs to the glycosyl hydrolase 19 family. Chitinase class I subfamily. Post-translationally, O-glycosylated on hydroxyprolines; contains xylose. In terms of tissue distribution, localized to infected area.

It localises to the secreted. Its subcellular location is the extracellular space. It catalyses the reaction Random endo-hydrolysis of N-acetyl-beta-D-glucosaminide (1-&gt;4)-beta-linkages in chitin and chitodextrins.. Functionally, defense against chitin-containing fungal pathogens. This chain is Acidic endochitinase SP2 (SP2), found in Beta vulgaris (Sugar beet).